A 297-amino-acid polypeptide reads, in one-letter code: Large ribosomal subunit protein uL18 (297 aa).

The span at 258–267 (KKAHPKKRWT) shows a compositional bias: basic residues. Residues 258–277 (KKAHPKKRWTEKKLTREQRQ) form a disordered region. Basic and acidic residues predominate over residues 268–277 (EKKLTREQRQ).

The protein belongs to the universal ribosomal protein uL18 family. Component of the large ribosomal subunit (LSU).

Its subcellular location is the cytoplasm. The protein localises to the nucleus. In terms of biological role, component of the ribosome, a large ribonucleoprotein complex responsible for the synthesis of proteins in the cell. The small ribosomal subunit (SSU) binds messenger RNAs (mRNAs) and translates the encoded message by selecting cognate aminoacyl-transfer RNA (tRNA) molecules. The large subunit (LSU) contains the ribosomal catalytic site termed the peptidyl transferase center (PTC), which catalyzes the formation of peptide bonds, thereby polymerizing the amino acids delivered by tRNAs into a polypeptide chain. The nascent polypeptides leave the ribosome through a tunnel in the LSU and interact with protein factors that function in enzymatic processing, targeting, and the membrane insertion of nascent chains at the exit of the ribosomal tunnel. The chain is Large ribosomal subunit protein uL18 (RPL5A) from Helianthus annuus (Common sunflower).